The primary structure comprises 408 residues: MDNLAIFEEFNSKKISQDDLEATIISLNNYFVKLNDLNNQYLNLIRQDNIDKSKKQNIKIQRKNTKIEINKIIATTKLFKQNIKLAESMYKKIKSSNNQDDIKKAQLEVDNAKSMLIQFKEAINGQGKSIKLKKLNDVAIEIKNLSFKYGPEFPNAIDDVSFTINQGEYVTIIGHNGSGKSTISKILIGVLNAQQGEIRIFGNIVHDHNIEQARKFLGIVFQNPDNQFIGSTVEADIAFGLENKRVDPKKMPDIILDSAKKVGMEWALKKEPLNLSGGQKQRVAIASTLALDPDIMIFDEATSMLDPKGKREIKEIMVQLRETRTKTILSITHDMDEILNADKVIVLDHGKLVRVAKPLDIVEDKEFLRNIQLDVPFVGLVREELEKKGIKIASTQNIDELVEQICKK.

The region spanning 140 to 374 (IEIKNLSFKY…KEFLRNIQLD (235 aa)) is the ABC transporter domain. 174-181 (GHNGSGKS) provides a ligand contact to ATP.

The protein belongs to the ABC transporter superfamily. Energy-coupling factor EcfA family. Forms a stable energy-coupling factor (ECF) transporter complex composed of 2 membrane-embedded substrate-binding proteins (S component), 2 ATP-binding proteins (A component) and 2 transmembrane proteins (T component).

It localises to the cell membrane. Functionally, ATP-binding (A) component of a common energy-coupling factor (ECF) ABC-transporter complex. Unlike classic ABC transporters this ECF transporter provides the energy necessary to transport a number of different substrates. The chain is Energy-coupling factor transporter ATP-binding protein EcfA1 from Mycoplasma capricolum subsp. capricolum (strain California kid / ATCC 27343 / NCTC 10154).